The chain runs to 533 residues: Probable nucleolar protein 5-1 (533 aa).

A Nop domain is found at 280–398 (IAPNLTALVG…LEARLRTLEG (119 aa)). Residues 402–533 (GRLSGSAKGK…EKKKKKKTEV (132 aa)) are disordered. Over residues 412 to 423 (PKIEVYDKDKKK) the composition is skewed to basic and acidic residues. The segment covering 433 to 450 (KTYNTAADSLLQTPTVDS) has biased composition (polar residues). 2 stretches are compositionally biased toward basic and acidic residues: residues 474–489 (TEEP…KTEA) and 515–524 (MPAKKKEKSE).

It belongs to the NOP5/NOP56 family.

It is found in the nucleus. It localises to the nucleolus. Its function is as follows. Required for 60S ribosomal subunit biogenesis. The chain is Probable nucleolar protein 5-1 (NOP5-1) from Arabidopsis thaliana (Mouse-ear cress).